Here is a 433-residue protein sequence, read N- to C-terminus: Phosphomethylpyrimidine synthase 1 (433 aa).

Substrate contacts are provided by residues asparagine 66, methionine 94, tyrosine 123, histidine 162, 184-186 (SRG), 225-228 (DALR), and glutamate 264. Histidine 268 is a Zn(2+) binding site. Tyrosine 291 is a binding site for substrate. Position 332 (histidine 332) interacts with Zn(2+). [4Fe-4S] cluster-binding residues include cysteine 408, cysteine 411, and cysteine 415.

This sequence belongs to the ThiC family. [4Fe-4S] cluster is required as a cofactor.

The catalysed reaction is 5-amino-1-(5-phospho-beta-D-ribosyl)imidazole + S-adenosyl-L-methionine = 4-amino-2-methyl-5-(phosphooxymethyl)pyrimidine + CO + 5'-deoxyadenosine + formate + L-methionine + 3 H(+). It functions in the pathway cofactor biosynthesis; thiamine diphosphate biosynthesis. Catalyzes the synthesis of the hydroxymethylpyrimidine phosphate (HMP-P) moiety of thiamine from aminoimidazole ribotide (AIR) in a radical S-adenosyl-L-methionine (SAM)-dependent reaction. This is Phosphomethylpyrimidine synthase 1 from Saccharolobus solfataricus (strain ATCC 35092 / DSM 1617 / JCM 11322 / P2) (Sulfolobus solfataricus).